Consider the following 348-residue polypeptide: Putative olfactory receptor 3A4 (348 aa).

The Extracellular portion of the chain corresponds to 1–28; that stretch reads MDLGNSGNDSVVTKFVLLGLTETAALQP. N-linked (GlcNAc...) asparagine glycosylation occurs at asparagine 8. A helical membrane pass occupies residues 29 to 52; that stretch reads ILFVIFLLAYVTTIGGTLSILAAI. At 53–60 the chain is on the cytoplasmic side; it reads LMETKLHS. A helical membrane pass occupies residues 61 to 82; the sequence is PMYFFLGNLSLPDVGCVSVTVP. Residues 83–103 are Extracellular-facing; sequence AMLSHFISNDRSIPYKACLSE. Cysteine 100 and cysteine 192 form a disulfide bridge. The helical transmembrane segment at 104–123 threads the bilayer; it reads LFFFHLLAGADCFLLTIMAY. Residues 124–143 lie on the Cytoplasmic side of the membrane; the sequence is DRYLAICQSLTYSSRMSWGI. Residues 144-161 traverse the membrane as a helical segment; sequence QQALVGMSCVFSFTNALT. Residues 162–199 lie on the Extracellular side of the membrane; it reads QTVALSPLNFCGPNVINHFYCDLPQPFQLSCSSVHLNG. The helical transmembrane segment at 200-222 threads the bilayer; sequence QLLFVAAAFMGVAPLVLITVSYA. Topologically, residues 223 to 239 are cytoplasmic; the sequence is HVAAAVLRIRSAEGRKK. The helical transmembrane segment at 240–262 threads the bilayer; that stretch reads AFSTCSSHLTVVGIFYGTGVFSY. Topologically, residues 263 to 275 are extracellular; it reads TRLGSVESSDKDK. The chain crosses the membrane as a helical span at residues 276 to 295; the sequence is GIGILNTVISPMLNPLIYWT. At 296-348 the chain is on the cytoplasmic side; sequence SLLDVGCISHCSSDAGVSPGPPVQSSLCCLQFTALLSPPPGWGGLSPLNSHGL.

It belongs to the G-protein coupled receptor 1 family.

The protein localises to the cell membrane. Odorant receptor. This Homo sapiens (Human) protein is Putative olfactory receptor 3A4 (OR3A4P).